The primary structure comprises 493 residues: Putative trans-acting regulator SP_1800 (493 aa).

This sequence belongs to the AtxA/AcpA family.

In Streptococcus pneumoniae serotype 4 (strain ATCC BAA-334 / TIGR4), this protein is Putative trans-acting regulator SP_1800.